A 261-amino-acid polypeptide reads, in one-letter code: Cytochrome c oxidase subunit 3 (261 aa).

The Mitochondrial matrix portion of the chain corresponds to 1 to 15 (MTHQTHAYHMVNPSP). The chain crosses the membrane as a helical span at residues 16–34 (WPLTGALSALLMTSGLTMW). At 35 to 40 (FHFNST) the chain is on the mitochondrial intermembrane side. Residues 41–66 (ILLMLGLTTNMLTMYQWWRDIIREST) form a helical membrane-spanning segment. Over 67 to 72 (FQGHHT) the chain is Mitochondrial matrix. The helical transmembrane segment at 73-105 (PVVQKGLRYGMILFIISEVLFFTGFFWAFYHSS) threads the bilayer. Topologically, residues 106-128 (LAPTPELGGCWPPTGIHPLNPLE) are mitochondrial intermembrane. A helical membrane pass occupies residues 129–152 (VPLLNTSVLLASGVSITWAHHSLM). Residues 153–155 (EGH) are Mitochondrial matrix-facing. A helical transmembrane segment spans residues 156-183 (RNHMLQALFITIALGVYFTLLQASEYYE). At 184–190 (APFTISD) the chain is on the mitochondrial intermembrane side. A helical membrane pass occupies residues 191-223 (GVYGSTFFVATGFHGLHVIIGSTFLIVCFFRQL). Residues 224–232 (KFHFTSSHH) lie on the Mitochondrial matrix side of the membrane. The helical transmembrane segment at 233-256 (FGFEAAAWYWHFVDVVWLFLYVSI) threads the bilayer. Residues 257–261 (YWWGS) are Mitochondrial intermembrane-facing.

Belongs to the cytochrome c oxidase subunit 3 family. Component of the cytochrome c oxidase (complex IV, CIV), a multisubunit enzyme composed of 14 subunits. The complex is composed of a catalytic core of 3 subunits MT-CO1, MT-CO2 and MT-CO3, encoded in the mitochondrial DNA, and 11 supernumerary subunits COX4I, COX5A, COX5B, COX6A, COX6B, COX6C, COX7A, COX7B, COX7C, COX8 and NDUFA4, which are encoded in the nuclear genome. The complex exists as a monomer or a dimer and forms supercomplexes (SCs) in the inner mitochondrial membrane with NADH-ubiquinone oxidoreductase (complex I, CI) and ubiquinol-cytochrome c oxidoreductase (cytochrome b-c1 complex, complex III, CIII), resulting in different assemblies (supercomplex SCI(1)III(2)IV(1) and megacomplex MCI(2)III(2)IV(2)).

It is found in the mitochondrion inner membrane. It catalyses the reaction 4 Fe(II)-[cytochrome c] + O2 + 8 H(+)(in) = 4 Fe(III)-[cytochrome c] + 2 H2O + 4 H(+)(out). In terms of biological role, component of the cytochrome c oxidase, the last enzyme in the mitochondrial electron transport chain which drives oxidative phosphorylation. The respiratory chain contains 3 multisubunit complexes succinate dehydrogenase (complex II, CII), ubiquinol-cytochrome c oxidoreductase (cytochrome b-c1 complex, complex III, CIII) and cytochrome c oxidase (complex IV, CIV), that cooperate to transfer electrons derived from NADH and succinate to molecular oxygen, creating an electrochemical gradient over the inner membrane that drives transmembrane transport and the ATP synthase. Cytochrome c oxidase is the component of the respiratory chain that catalyzes the reduction of oxygen to water. Electrons originating from reduced cytochrome c in the intermembrane space (IMS) are transferred via the dinuclear copper A center (CU(A)) of subunit 2 and heme A of subunit 1 to the active site in subunit 1, a binuclear center (BNC) formed by heme A3 and copper B (CU(B)). The BNC reduces molecular oxygen to 2 water molecules using 4 electrons from cytochrome c in the IMS and 4 protons from the mitochondrial matrix. The protein is Cytochrome c oxidase subunit 3 (MT-CO3) of Tragelaphus strepsiceros (Greater kudu).